The following is a 262-amino-acid chain: Probable esterase azaC (262 aa).

Residues Ser-119, Asp-188, and His-216 each act as charge relay system in the active site.

This sequence belongs to the LovG family.

Its pathway is secondary metabolite biosynthesis. Functionally, probable esterase; part of the gene cluster that mediates the biosynthesis of azaphilones, a class of fungal metabolites characterized by a highly oxygenated pyrano-quinone bicyclic core and exhibiting a broad range of bioactivities. In the first step, the non-reducing polyketide synthase azaA forms the hexaketide precursor from successive condensations of five malonyl-CoA units, presumably with a simple acetyl-CoA starter unit. The reactive polyketide chain then undergoes a PT-mediated C2-C7 cyclization to afford the aromatic ring and is eventually released as an aldehyde through the R-domain. The putative ketoreductase azaE is proposed to catalyze the reduction of the terminal ketone resulting in the early culture product FK17-P2a. The monooxygenase azaH was demonstrated to be the only enzyme required to convert FK17-P2a to azanigerone E. AzaH first hydroxylates the benzaldehyde intermediate FK17-P2a at C4, which triggers the formation of the pyran-ring to afford azanigerone E. In parallel, the 2,4-dimethylhexanoyl chain is synthesized by the HR-PKS azaB and is proposed to be transferred to the C4-hydroxyl of azanigerone E by the acyltransferase azaD directly from the ACP domain of azaB. Alternatively, the 2,4-dimethyl-hexanoyl chain may be offloaded from the HR-PKS as a carboxylic acid and converted to an acyl-CoA by azaF. The resulting acyl-CoA molecule could then be taken up as a substrate by AzaD to form azanigerone B. To yield the carboxylic acid substituent in azanigerone A, the hydroxypropyl side chain of azanigerone B would need to undergo a C-C oxidative cleavage catalyzed by cytochrome P450 AzaI. AzaI is proposed to act on a vicinal diol that leads to a C-C bond scission either through an alkoxyradical intermediate or a peroxy complex. In the biosynthesis of azanigerone A, azanigerone B first undergoes hydroxylation at C10, possibly catalyzed by one of the two FAD-dependent monooxygenases encoded in the cluster, azaG or azaL, resulting in the vicinal diol azanigerone C. Oxidative cleavage of azanigerone C by azaI would yield the corresponding aldehyde derivative of azanigerone A. Finally, the dehydrogenase azaJ is proposed to convert the aldehyde functional group into the carboxylic acid, completing the conversion from azanigerone B to azanigerone A. Alternatively, the oxidation of aldehyde to carboxylic acid may be catalyzed by the same P450 enzyme azaI via consecutive oxidation or by endogenous alcohol dehydrogenase. The polypeptide is Probable esterase azaC (Aspergillus niger (strain ATCC 1015 / CBS 113.46 / FGSC A1144 / LSHB Ac4 / NCTC 3858a / NRRL 328 / USDA 3528.7)).